Consider the following 116-residue polypeptide: MKFLLSFVVLAVFSASAFAKESPPKIQVYSRNPGEFGKENTLICHVSDFHPPDITIDLLKNGEVIPNAEQTDLAFEKGWKFHLTKSVSFTPTSNDKFTCRVRHLKETKNISWEPDM.

A signal peptide spans 1–19 (MKFLLSFVVLAVFSASAFA). One can recognise an Ig-like C1-type domain in the interval 24 to 111 (PKIQVYSRNP…RHLKETKNIS (88 aa)). Cys44 and Cys99 form a disulfide bridge.

It belongs to the beta-2-microglobulin family. In terms of assembly, heterodimer of an alpha chain and a beta chain. Beta-2-microglobulin is the beta-chain of major histocompatibility complex class I molecules.

Its subcellular location is the secreted. Component of the class I major histocompatibility complex (MHC). Involved in the presentation of peptide antigens to the immune system. The chain is Beta-2-microglobulin (b2m) from Ictalurus punctatus (Channel catfish).